Consider the following 280-residue polypeptide: 4-diphosphocytidyl-2-C-methyl-D-erythritol kinase (280 aa).

The active site involves K9. ATP is bound at residue 92–102 (PMGGGLGGGSS). Residue D134 is part of the active site.

Belongs to the GHMP kinase family. IspE subfamily.

The catalysed reaction is 4-CDP-2-C-methyl-D-erythritol + ATP = 4-CDP-2-C-methyl-D-erythritol 2-phosphate + ADP + H(+). It participates in isoprenoid biosynthesis; isopentenyl diphosphate biosynthesis via DXP pathway; isopentenyl diphosphate from 1-deoxy-D-xylulose 5-phosphate: step 3/6. Catalyzes the phosphorylation of the position 2 hydroxy group of 4-diphosphocytidyl-2C-methyl-D-erythritol. This chain is 4-diphosphocytidyl-2-C-methyl-D-erythritol kinase, found in Nitrosococcus oceani (strain ATCC 19707 / BCRC 17464 / JCM 30415 / NCIMB 11848 / C-107).